Reading from the N-terminus, the 293-residue chain is tRNA pseudouridine synthase B (293 aa).

Asp-38 (nucleophile) is an active-site residue.

This sequence belongs to the pseudouridine synthase TruB family. Type 1 subfamily.

It carries out the reaction uridine(55) in tRNA = pseudouridine(55) in tRNA. Its function is as follows. Responsible for synthesis of pseudouridine from uracil-55 in the psi GC loop of transfer RNAs. The chain is tRNA pseudouridine synthase B from Nostoc sp. (strain PCC 7120 / SAG 25.82 / UTEX 2576).